The primary structure comprises 297 residues: N-acetylneuraminate lyase (297 aa).

Positions 47 and 48 each coordinate aceneuramate. Y137 (proton donor) is an active-site residue. The active-site Schiff-base intermediate with substrate is K165. T167, G189, D191, E192, and S208 together coordinate aceneuramate.

It belongs to the DapA family. NanA subfamily. As to quaternary structure, homotetramer.

It localises to the cytoplasm. The enzyme catalyses aceneuramate = aldehydo-N-acetyl-D-mannosamine + pyruvate. The protein operates within amino-sugar metabolism; N-acetylneuraminate degradation; D-fructose 6-phosphate from N-acetylneuraminate: step 1/5. Catalyzes the reversible aldol cleavage of N-acetylneuraminic acid (sialic acid; Neu5Ac) to form pyruvate and N-acetylmannosamine (ManNAc) via a Schiff base intermediate. This chain is N-acetylneuraminate lyase, found in Salmonella choleraesuis (strain SC-B67).